The following is a 312-amino-acid chain: Methionyl-tRNA formyltransferase (312 aa).

110–113 (SLLP) lines the (6S)-5,6,7,8-tetrahydrofolate pocket.

It belongs to the Fmt family.

It carries out the reaction L-methionyl-tRNA(fMet) + (6R)-10-formyltetrahydrofolate = N-formyl-L-methionyl-tRNA(fMet) + (6S)-5,6,7,8-tetrahydrofolate + H(+). Functionally, attaches a formyl group to the free amino group of methionyl-tRNA(fMet). The formyl group appears to play a dual role in the initiator identity of N-formylmethionyl-tRNA by promoting its recognition by IF2 and preventing the misappropriation of this tRNA by the elongation apparatus. The polypeptide is Methionyl-tRNA formyltransferase (Streptococcus suis (strain 05ZYH33)).